The primary structure comprises 501 residues: Glycerol kinase (501 aa).

An ADP-binding site is contributed by Thr-14. Residues Thr-14, Thr-15, and Ser-16 each contribute to the ATP site. Thr-14 contributes to the sn-glycerol 3-phosphate binding site. Arg-18 provides a ligand contact to ADP. Sn-glycerol 3-phosphate is bound by residues Arg-84, Glu-85, Tyr-136, and Asp-246. Glycerol-binding residues include Arg-84, Glu-85, Tyr-136, Asp-246, and Gln-247. 2 residues coordinate ADP: Thr-268 and Gly-311. Positions 268, 311, 315, and 412 each coordinate ATP. Gly-412 and Asn-416 together coordinate ADP.

It belongs to the FGGY kinase family. Homotetramer and homodimer (in equilibrium).

It carries out the reaction glycerol + ATP = sn-glycerol 3-phosphate + ADP + H(+). The protein operates within polyol metabolism; glycerol degradation via glycerol kinase pathway; sn-glycerol 3-phosphate from glycerol: step 1/1. With respect to regulation, activated by phosphorylation and inhibited by fructose 1,6-bisphosphate (FBP). Its function is as follows. Key enzyme in the regulation of glycerol uptake and metabolism. Catalyzes the phosphorylation of glycerol to yield sn-glycerol 3-phosphate. In Desulforamulus reducens (strain ATCC BAA-1160 / DSM 100696 / MI-1) (Desulfotomaculum reducens), this protein is Glycerol kinase.